The chain runs to 220 residues: Ribosomal RNA small subunit methyltransferase Nep1 (220 aa).

Residues glycine 178, glycine 183, and 196 to 201 contribute to the S-adenosyl-L-methionine site; that span reads IYKEPL.

It belongs to the class IV-like SAM-binding methyltransferase superfamily. RNA methyltransferase NEP1 family. Homodimer.

It catalyses the reaction a pseudouridine in rRNA + S-adenosyl-L-methionine = an N(1)-methylpseudouridine in rRNA + S-adenosyl-L-homocysteine + H(+). In terms of biological role, methyltransferase involved in ribosomal biogenesis. Specifically catalyzes the N1-methylation of the pseudouridine corresponding to position 914 in M.jannaschii 16S rRNA. The sequence is that of Ribosomal RNA small subunit methyltransferase Nep1 from Thermococcus sibiricus (strain DSM 12597 / MM 739).